Reading from the N-terminus, the 650-residue chain is Glycoprotein antigen BM86 (650 aa).

Positions 1-19 are cleaved as a signal peptide; that stretch reads MRGIALFVAAVSLIVEGTA. 2 EGF-like domains span residues 20 to 66 and 67 to 104; these read ESSI…KQCE and YKDT…LQCK. 6 disulfide bridges follow: Cys24/Cys37, Cys32/Cys49, Cys51/Cys65, Cys71/Cys81, Cys76/Cys91, and Cys93/Cys103. Residues Asn141 and Asn182 are each glycosylated (N-linked (GlcNAc...) asparagine). EGF-like domains lie at 205 to 247, 251 to 292, and 291 to 335; these read CINA…ITCK, HTVS…DTCI, and CISD…NECL. 9 cysteine pairs are disulfide-bonded: Cys209–Cys222, Cys218–Cys231, Cys233–Cys246, Cys255–Cys269, Cys263–Cys278, Cys280–Cys291, Cys295–Cys307, Cys300–Cys316, and Cys318–Cys334. Residues Asn348 and Asn382 are each glycosylated (N-linked (GlcNAc...) asparagine). 2 consecutive EGF-like domains span residues 482–530 and 531–568; these read RRSV…IGCI and ERTT…HECY. Intrachain disulfides connect Cys486–Cys500, Cys492–Cys516, Cys518–Cys529, Cys535–Cys550, Cys543–Cys559, and Cys561–Cys567. The interval 603 to 628 is disordered; it reads KSEATTAATTTTKAKDKDPDPGKSSA. The GPI-anchor amidated serine moiety is linked to residue Ser627. A propeptide spans 628–650 (removed in mature form); that stretch reads AAAVSATGLLLLLAATSVTAASL.

It is found in the cell membrane. In Rhipicephalus microplus (Cattle tick), this protein is Glycoprotein antigen BM86.